The chain runs to 880 residues: Arginine metabolism regulation protein II (880 aa).

The zn(2)-C6 fungal-type DNA-binding region spans 21-48 (CWTCRGRKVKCDLRHPHCQRCEKSNLPC).

As to quaternary structure, interacts with ARG80 and MCM1.

It localises to the cytoplasm. The protein resides in the nucleus. In terms of biological role, with ARG80, ARG82 and MCM1, coordinates the expression of arginine anabolic and catabolic genes in response to arginine. In Saccharomyces cerevisiae (strain ATCC 204508 / S288c) (Baker's yeast), this protein is Arginine metabolism regulation protein II (ARG81).